Reading from the N-terminus, the 153-residue chain is Endoribonuclease YbeY (153 aa).

Residues histidine 114, histidine 118, and histidine 124 each coordinate Zn(2+).

This sequence belongs to the endoribonuclease YbeY family. It depends on Zn(2+) as a cofactor.

It localises to the cytoplasm. Functionally, single strand-specific metallo-endoribonuclease involved in late-stage 70S ribosome quality control and in maturation of the 3' terminus of the 16S rRNA. This Shewanella sp. (strain MR-7) protein is Endoribonuclease YbeY.